The following is a 200-amino-acid chain: 3-isopropylmalate dehydratase small subunit (200 aa).

Belongs to the LeuD family. LeuD type 1 subfamily. In terms of assembly, heterodimer of LeuC and LeuD.

It catalyses the reaction (2R,3S)-3-isopropylmalate = (2S)-2-isopropylmalate. Its pathway is amino-acid biosynthesis; L-leucine biosynthesis; L-leucine from 3-methyl-2-oxobutanoate: step 2/4. Functionally, catalyzes the isomerization between 2-isopropylmalate and 3-isopropylmalate, via the formation of 2-isopropylmaleate. In Proteus mirabilis (strain HI4320), this protein is 3-isopropylmalate dehydratase small subunit.